A 258-amino-acid chain; its full sequence is 3-deoxy-manno-octulosonate cytidylyltransferase (258 aa).

This sequence belongs to the KdsB family.

It localises to the cytoplasm. It carries out the reaction 3-deoxy-alpha-D-manno-oct-2-ulosonate + CTP = CMP-3-deoxy-beta-D-manno-octulosonate + diphosphate. It functions in the pathway nucleotide-sugar biosynthesis; CMP-3-deoxy-D-manno-octulosonate biosynthesis; CMP-3-deoxy-D-manno-octulosonate from 3-deoxy-D-manno-octulosonate and CTP: step 1/1. Its pathway is bacterial outer membrane biogenesis; lipopolysaccharide biosynthesis. Activates KDO (a required 8-carbon sugar) for incorporation into bacterial lipopolysaccharide in Gram-negative bacteria. This is 3-deoxy-manno-octulosonate cytidylyltransferase from Nitrobacter hamburgensis (strain DSM 10229 / NCIMB 13809 / X14).